The following is an 89-amino-acid chain: Putative membrane protein insertion efficiency factor (89 aa).

Belongs to the UPF0161 family.

It localises to the cell membrane. Could be involved in insertion of integral membrane proteins into the membrane. The chain is Putative membrane protein insertion efficiency factor from Exiguobacterium sp. (strain ATCC BAA-1283 / AT1b).